The chain runs to 733 residues: 1,4-alpha-glucan branching enzyme GlgB (733 aa).

Asp-409 serves as the catalytic Nucleophile. Glu-462 acts as the Proton donor in catalysis.

It belongs to the glycosyl hydrolase 13 family. GlgB subfamily. Monomer.

The enzyme catalyses Transfers a segment of a (1-&gt;4)-alpha-D-glucan chain to a primary hydroxy group in a similar glucan chain.. Its pathway is glycan biosynthesis; glycogen biosynthesis. Catalyzes the formation of the alpha-1,6-glucosidic linkages in glycogen by scission of a 1,4-alpha-linked oligosaccharide from growing alpha-1,4-glucan chains and the subsequent attachment of the oligosaccharide to the alpha-1,6 position. The sequence is that of 1,4-alpha-glucan branching enzyme GlgB from Gloeobacter violaceus (strain ATCC 29082 / PCC 7421).